The following is a 600-amino-acid chain: Elongation factor 4 (600 aa).

Residues 5–187 form the tr-type G domain; sequence KYIRNFSIIA…AIVNKLHPPK (183 aa). Residues 17 to 22 and 134 to 137 contribute to the GTP site; these read DHGKST and NKID.

The protein belongs to the TRAFAC class translation factor GTPase superfamily. Classic translation factor GTPase family. LepA subfamily.

The protein localises to the cell inner membrane. It carries out the reaction GTP + H2O = GDP + phosphate + H(+). Its function is as follows. Required for accurate and efficient protein synthesis under certain stress conditions. May act as a fidelity factor of the translation reaction, by catalyzing a one-codon backward translocation of tRNAs on improperly translocated ribosomes. Back-translocation proceeds from a post-translocation (POST) complex to a pre-translocation (PRE) complex, thus giving elongation factor G a second chance to translocate the tRNAs correctly. Binds to ribosomes in a GTP-dependent manner. The polypeptide is Elongation factor 4 (Rickettsia akari (strain Hartford)).